A 174-amino-acid polypeptide reads, in one-letter code: Ribosome maturation factor RimM (174 aa).

Residues 98–171 (EGEFYFHQII…TIHIEVMEGL (74 aa)) form the PRC barrel domain.

The protein belongs to the RimM family. Binds ribosomal protein uS19.

Its subcellular location is the cytoplasm. Its function is as follows. An accessory protein needed during the final step in the assembly of 30S ribosomal subunit, possibly for assembly of the head region. Essential for efficient processing of 16S rRNA. May be needed both before and after RbfA during the maturation of 16S rRNA. It has affinity for free ribosomal 30S subunits but not for 70S ribosomes. This is Ribosome maturation factor RimM from Bacillus pumilus (strain SAFR-032).